The chain runs to 253 residues: 23S rRNA (cytidine-2'-O)-methyltransferase TlyA (253 aa).

One can recognise an S4 RNA-binding domain in the interval 1 to 73; it reads MRFDFFVSKR…LKLDLLSEIY (73 aa).

The protein belongs to the TlyA family.

It catalyses the reaction cytidine(1920) in 23S rRNA + S-adenosyl-L-methionine = 2'-O-methylcytidine(1920) in 23S rRNA + S-adenosyl-L-homocysteine + H(+). Catalyzes the 2'-O-methylation at nucleotide C1920 in 23S rRNA. Enhances motility. Enhances biofilm formation. Involved in the assembly of 70S ribosomes. Involved in virulence by promoting adherence and invasion to host cells. Involved in pathogenicity by modulating secretion of host-protective chemokine interleukin 8 (IL-8). Involved in susceptibility to antibiotic capreomycin. The sequence is that of 23S rRNA (cytidine-2'-O)-methyltransferase TlyA from Campylobacter jejuni subsp. jejuni serotype O:23/36 (strain 81-176).